Here is a 142-residue protein sequence, read N- to C-terminus: 3-hydroxyacyl-[acyl-carrier-protein] dehydratase FabZ (142 aa).

His-48 is an active-site residue.

This sequence belongs to the thioester dehydratase family. FabZ subfamily.

It localises to the cytoplasm. It carries out the reaction a (3R)-hydroxyacyl-[ACP] = a (2E)-enoyl-[ACP] + H2O. Its function is as follows. Involved in unsaturated fatty acids biosynthesis. Catalyzes the dehydration of short chain beta-hydroxyacyl-ACPs and long chain saturated and unsaturated beta-hydroxyacyl-ACPs. The polypeptide is 3-hydroxyacyl-[acyl-carrier-protein] dehydratase FabZ (Anoxybacillus flavithermus (strain DSM 21510 / WK1)).